The primary structure comprises 398 residues: Acetate kinase (398 aa).

Mg(2+) is bound at residue N8. K15 lines the ATP pocket. Substrate is bound at residue R89. Residue D146 is the Proton donor/acceptor of the active site. ATP-binding positions include 206–210 (HIGNG), 283–285 (DMR), and 331–335 (GMGEN). E383 lines the Mg(2+) pocket.

Belongs to the acetokinase family. Homodimer. It depends on Mg(2+) as a cofactor. The cofactor is Mn(2+).

The protein resides in the cytoplasm. The enzyme catalyses acetate + ATP = acetyl phosphate + ADP. It participates in metabolic intermediate biosynthesis; acetyl-CoA biosynthesis; acetyl-CoA from acetate: step 1/2. Its function is as follows. Catalyzes the formation of acetyl phosphate from acetate and ATP. Can also catalyze the reverse reaction. The sequence is that of Acetate kinase from Streptococcus pyogenes serotype M12 (strain MGAS2096).